We begin with the raw amino-acid sequence, 38 residues long: Photosystem I reaction center subunit IX (38 aa).

Residues 6-26 form a helical membrane-spanning segment; the sequence is YLSTAPVVATLWLFLTAGILI.

The protein belongs to the PsaJ family.

Its subcellular location is the plastid. The protein resides in the chloroplast thylakoid membrane. In terms of biological role, may help in the organization of the PsaE and PsaF subunits. This is Photosystem I reaction center subunit IX from Cyanidioschyzon merolae (strain NIES-3377 / 10D) (Unicellular red alga).